The chain runs to 130 residues: MAENQNYGTGRRKSSSARVFIKPGSGKITINQRELDVYFGRETARMVVRQPLELVXLTDKLDLYITVKGGGISGQAGAIRHGITRALMEYDETLRPALRAAGFVTRDARRVERKKVGLHKARRRPQYSKR.

It belongs to the universal ribosomal protein uS9 family.

In Haemophilus influenzae (strain ATCC 51907 / DSM 11121 / KW20 / Rd), this protein is Small ribosomal subunit protein uS9 (rpsI).